The following is a 153-amino-acid chain: Flagellar assembly factor FliW (153 aa).

The protein belongs to the FliW family. In terms of assembly, interacts with translational regulator CsrA and flagellin(s).

Its subcellular location is the cytoplasm. Acts as an anti-CsrA protein, binds CsrA and prevents it from repressing translation of its target genes, one of which is flagellin. Binds to flagellin and participates in the assembly of the flagellum. This is Flagellar assembly factor FliW from Leptospira biflexa serovar Patoc (strain Patoc 1 / Ames).